The sequence spans 572 residues: MKKLSGIGVSDGMALAKAFLVKTPEFAVNKYLKHQLTKAQAKRLLDSAFKKAVKDLEEIKEITVNNINTEAGMIFDAHIQMLNDPTITEQLEQQLAQNVHPVIAVDTVFSQTATMFSQMQDKYFQERAADILDLRQRLLAYLTGQKPHDLVKIKSDVIIVAHDLTPSQTATLNKKYVKGFLTEIGGRTSHAAIMARSLEIPAVVGIKGITTKVKDGQIVGVDGRKGIAGLDLNSKDTTEWKKQKALEEKYQQELKQYTNKETVTLDGHAVVVAANIGNVKDMELACQYNTNGVGLFRTEFLYMNSQEWPDEETQYQAYKAVLEQAHGDLVIIRTLDIGGDKKLNYYEFPHEDNPFLGYRALRLTLDKQDIFKTQLRALLRAADHGQLGIMFPMVATLDELLQAKQLLNQVHQELGGNKQFKLGIMIEIPAAVLAANTLSHHVDFFSIGTNDLIQYSFAADRMNKNVSYLYQPLNPALLKLIYLTIEGGKVNDIWTGMCGEMAGEPLAIPLLLGLGLKEFSMSASSMFKARMIIAKLNYTECQTLAQKALTLANAKEVEKLVEKFFKKKDIFI.

The active-site Tele-phosphohistidine intermediate is H190. The phosphoenolpyruvate site is built by R297 and R333. Residues E427 and D451 each contribute to the Mg(2+) site. Phosphoenolpyruvate is bound by residues 450 to 451 (ND) and R461. Catalysis depends on C498, which acts as the Proton donor.

The protein belongs to the PEP-utilizing enzyme family. As to quaternary structure, homodimer. It depends on Mg(2+) as a cofactor.

The protein resides in the cytoplasm. The enzyme catalyses L-histidyl-[protein] + phosphoenolpyruvate = N(pros)-phospho-L-histidyl-[protein] + pyruvate. General (non sugar-specific) component of the phosphoenolpyruvate-dependent sugar phosphotransferase system (sugar PTS). This major carbohydrate active-transport system catalyzes the phosphorylation of incoming sugar substrates concomitantly with their translocation across the cell membrane. Enzyme I transfers the phosphoryl group from phosphoenolpyruvate (PEP) to the phosphoryl carrier protein (HPr). This is Phosphoenolpyruvate-protein phosphotransferase (ptsI) from Mycoplasma pneumoniae (strain ATCC 29342 / M129 / Subtype 1) (Mycoplasmoides pneumoniae).